Reading from the N-terminus, the 197-residue chain is Phosphoheptose isomerase (197 aa).

Residues 36 to 197 (MVNALLNEGK…IDSQLFGSEE (162 aa)) enclose the SIS domain. 51–53 (NGG) provides a ligand contact to substrate. Residues His-60 and Glu-64 each coordinate Zn(2+). Substrate is bound by residues Glu-64, 93-94 (ND), 119-121 (STS), Ser-124, and Gln-174. Residues Gln-174 and His-182 each coordinate Zn(2+).

Belongs to the SIS family. GmhA subfamily. Homotetramer. Zn(2+) serves as cofactor.

It is found in the cytoplasm. The enzyme catalyses 2 D-sedoheptulose 7-phosphate = D-glycero-alpha-D-manno-heptose 7-phosphate + D-glycero-beta-D-manno-heptose 7-phosphate. It functions in the pathway carbohydrate biosynthesis; D-glycero-D-manno-heptose 7-phosphate biosynthesis; D-glycero-alpha-D-manno-heptose 7-phosphate and D-glycero-beta-D-manno-heptose 7-phosphate from sedoheptulose 7-phosphate: step 1/1. Catalyzes the isomerization of sedoheptulose 7-phosphate in D-glycero-D-manno-heptose 7-phosphate. This chain is Phosphoheptose isomerase, found in Pseudomonas syringae pv. syringae (strain B728a).